Consider the following 290-residue polypeptide: Probable ECF RNA polymerase sigma factor SigI (290 aa).

The tract at residues 11 to 74 (WRAHRAYLVD…LCLDHIKSAS (64 aa)) is sigma-70 factor domain-2. The Polymerase core binding signature appears at 34–37 (DMVQ). The tract at residues 110 to 162 (LALLIMLERLGPAERVVFVLHEIFGLPYQQIATTIGSQASTCRQLAHRARRKI) is sigma-70 factor domain-4_2. Positions 137–156 (YQQIATTIGSQASTCRQLAH) form a DNA-binding region, H-T-H motif.

It belongs to the sigma-70 factor family. ECF subfamily. As to quaternary structure, interacts transiently with the RNA polymerase catalytic core formed by RpoA, RpoB, RpoC and RpoZ (2 alpha, 1 beta, 1 beta' and 1 omega subunit) to form the RNA polymerase holoenzyme that can initiate transcription.

Functionally, sigma factors are initiation factors that promote the attachment of RNA polymerase to specific initiation sites and are then released. Extracytoplasmic function (ECF) sigma factors are held in an inactive form by a cognate anti-sigma factor until released, although no anti-sigma factor is known for this protein. The chain is Probable ECF RNA polymerase sigma factor SigI (sigI) from Mycobacterium tuberculosis (strain CDC 1551 / Oshkosh).